The following is a 117-amino-acid chain: MPRVKRGVQARARHKKVLKQAKGYYGARSRVYRVAFQAVTKAGQYAYRDRRQKKRTFRALWIARINAAARQNGLSYSRLINGLKKASIEIDRKILADIAVFDKATFTVLVEKAKAAL.

Belongs to the bacterial ribosomal protein bL20 family.

Its function is as follows. Binds directly to 23S ribosomal RNA and is necessary for the in vitro assembly process of the 50S ribosomal subunit. It is not involved in the protein synthesizing functions of that subunit. The protein is Large ribosomal subunit protein bL20 of Photobacterium profundum (strain SS9).